The following is a 418-amino-acid chain: Alpha-(1-&gt;3)-arabinofuranosyltransferase (418 aa).

11 helical membrane-spanning segments follow: residues 25-45 (NAVA…VLAI), 81-101 (YLYN…THFT), 102-122 (LARW…FGLL), 125-145 (LSGW…AMLT), 153-173 (IFSN…WCVV), 183-203 (VIGL…LPLV), 210-230 (LILG…LVPG), 266-286 (MEIT…LALL), 293-312 (PYFW…FFLS), 327-349 (IFTL…AYFF), and 372-392 (ATVG…IWFI).

It belongs to the glycosyltransferase 87 family.

It is found in the cell membrane. It catalyses the reaction Adds an alpha-D-arabinofuranosyl group from trans,octacis-decaprenylphospho-beta-D-arabinofuranose at the 3-O-position of an alpha-(1-&gt;5)-arabinofuranan chain attached to a beta-(1-&gt;5)-galactofuranan chain.. The protein operates within cell wall biogenesis; cell wall polysaccharide biosynthesis. In terms of biological role, involved in the biosynthesis of the arabinogalactan (AG) region of the mycolylarabinogalactan-peptidoglycan (mAGP) complex, an essential component of the corynebacterial cell wall. Catalyzes the addition of an arabinofuranosyl (Araf) residue from the sugar donor beta-D-arabinofuranosyl-1-monophosphoryldecaprenol (DPA) on the C-3 of an alpha-(1-&gt;5)-linked Araf from the arabinan backbone of AG. The polypeptide is Alpha-(1-&gt;3)-arabinofuranosyltransferase (Corynebacterium glutamicum (strain ATCC 13032 / DSM 20300 / JCM 1318 / BCRC 11384 / CCUG 27702 / LMG 3730 / NBRC 12168 / NCIMB 10025 / NRRL B-2784 / 534)).